The following is a 546-amino-acid chain: NAD(P)H-quinone oxidoreductase chain 4 (546 aa).

Transmembrane regions (helical) follow at residues 24–44 (FPWL…IPFF), 56–76 (FALS…INGF), 106–126 (ISMP…LAAW), 132–152 (PKLF…VFAV), 156–176 (LLFF…LAIW), 188–208 (FIIY…AMGF), 232–252 (ILCY…VPLH), 263–283 (TAPV…YALL), 297–317 (FAPL…LTSF), 326–346 (IAYS…SFSS), 352–372 (AMLQ…LVGA), 396–416 (FALW…SGFV), 437–457 (VVMA…LLSM), and 484–504 (VYII…PRLV).

It belongs to the complex I subunit 4 family.

It localises to the cellular thylakoid membrane. The enzyme catalyses a plastoquinone + NADH + (n+1) H(+)(in) = a plastoquinol + NAD(+) + n H(+)(out). The catalysed reaction is a plastoquinone + NADPH + (n+1) H(+)(in) = a plastoquinol + NADP(+) + n H(+)(out). NDH-1 shuttles electrons from NAD(P)H, via FMN and iron-sulfur (Fe-S) centers, to quinones in the respiratory chain. The immediate electron acceptor for the enzyme in this species is believed to be plastoquinone. Couples the redox reaction to proton translocation (for every two electrons transferred, four hydrogen ions are translocated across the cytoplasmic membrane), and thus conserves the redox energy in a proton gradient. In Prochlorococcus marinus (strain MIT 9515), this protein is NAD(P)H-quinone oxidoreductase chain 4.